Reading from the N-terminus, the 159-residue chain is Cytochrome b6-f complex subunit 4 (159 aa).

3 helical membrane-spanning segments follow: residues 36 to 56 (LLYI…GLAV), 95 to 115 (LLGV…PFLE), and 131 to 151 (TVFL…TLPI).

This sequence belongs to the cytochrome b family. PetD subfamily. As to quaternary structure, the 4 large subunits of the cytochrome b6-f complex are cytochrome b6, subunit IV (17 kDa polypeptide, petD), cytochrome f and the Rieske protein, while the 4 small subunits are petG, petL, petM and petN. The complex functions as a dimer.

Its subcellular location is the plastid. The protein resides in the chloroplast thylakoid membrane. In terms of biological role, component of the cytochrome b6-f complex, which mediates electron transfer between photosystem II (PSII) and photosystem I (PSI), cyclic electron flow around PSI, and state transitions. The protein is Cytochrome b6-f complex subunit 4 of Piper cenocladum (Ant piper).